A 385-amino-acid chain; its full sequence is Neuropeptide Y receptor type 2 (385 aa).

Residues 1–54 (MGPLEAIGEENQTDEMKMELFTKLYLPRYTTPVSELALDPKPELKDSTTLVEVQ) lie on the Extracellular side of the membrane. Residue Asn11 is glycosylated (N-linked (GlcNAc...) asparagine). The chain crosses the membrane as a helical span at residues 55-75 (IILIFAYCSIILLGVIGNSLV). Residues 76–90 (IHVIIKFKSMRTVTN) lie on the Cytoplasmic side of the membrane. The chain crosses the membrane as a helical span at residues 91-111 (FFIANLAVADLLVNTLCLPFT). Over 112–128 (LVYTLLGEWKLGPVLCH) the chain is Extracellular. Residues Cys127 and Cys207 are joined by a disulfide bond. Residues 129-149 (LVPYAQALAVHVSTVTLTVIA) traverse the membrane as a helical segment. Topologically, residues 150–169 (LDRHRCIVYHLESKISKRIS) are cytoplasmic. Residues 170 to 190 (FLIIGVAWAVSALLASPLAIF) form a helical membrane-spanning segment. Topologically, residues 191-221 (REYSLIEIIPDFKIVVCSEKWPGEGQLNYGT) are extracellular. The chain crosses the membrane as a helical span at residues 222 to 242 (IYSVSMLLIQYVLPLAIISYA). Residues 243–273 (YTRIWTKLKNHVSPGAGNDHYHHRRQKTTKM) are Cytoplasmic-facing. Residues 274–294 (LVCVVVVFAVSWLPFHAFQLV) form a helical membrane-spanning segment. Topologically, residues 295–308 (SDIDSQVLDLKEYK) are extracellular. Residues 309 to 329 (LIYTVFHVIAMCSTFANPLLY) form a helical membrane-spanning segment. Residues 330–385 (GWMNNNYRTAFLTAFQCEQRLDSIHPEVSAAFKARKKLEAKKSQFPGDSFTQPTNV) lie on the Cytoplasmic side of the membrane. Cys346 carries the S-palmitoyl cysteine lipid modification.

This sequence belongs to the G-protein coupled receptor 1 family.

It localises to the cell membrane. In terms of biological role, receptor for neuropeptide Y and peptide YY. This is Neuropeptide Y receptor type 2 (NPY2R) from Gallus gallus (Chicken).